Consider the following 231-residue polypeptide: Ion-translocating oxidoreductase complex subunit E (231 aa).

Transmembrane regions (helical) follow at residues 18 to 38 (ALVQ…ATNA), 39 to 59 (LGLG…ISTL), 63 to 83 (TPAE…VSAV), 86 to 106 (LINA…PLIV), 125 to 145 (ALSA…MFVL), and 182 to 202 (PFLL…MLAG).

The protein belongs to the NqrDE/RnfAE family. The complex is composed of six subunits: RsxA, RsxB, RsxC, RsxD, RsxE and RsxG.

The protein localises to the cell inner membrane. Its function is as follows. Part of a membrane-bound complex that couples electron transfer with translocation of ions across the membrane. Required to maintain the reduced state of SoxR. In Escherichia coli O7:K1 (strain IAI39 / ExPEC), this protein is Ion-translocating oxidoreductase complex subunit E.